We begin with the raw amino-acid sequence, 532 residues long: Sodium-dependent lysophosphatidylcholine symporter 1-A (532 aa).

The Cytoplasmic portion of the chain corresponds to 1 to 40 (MARGEGAEQFSSGLLPTAKSVTQNEIKMVKLPKQQERKRA). Residues 41-70 (LTVWSKVCFAIGGAPYQITGTALGFFLQIF) form a helical membrane-spanning segment. The Extracellular segment spans residues 71–81 (LLDVAQLNPLN). A helical membrane pass occupies residues 82-102 (ASVILFVGRAWDAVTDPTVGF). Residues 103-114 (LVSRTPWTRHGR) are Cytoplasmic-facing. A helical membrane pass occupies residues 115 to 134 (MMPWILVSTIPAVLCYFLIW). Residues 135 to 144 (VVPPIEQGKM) lie on the Extracellular side of the membrane. The helical transmembrane segment at 145-169 (MWYLLFYCLFQTLQTCFHVPYSALT) threads the bilayer. At 170–176 (MFISTEQ) the chain is on the cytoplasmic side. A helical transmembrane segment spans residues 177–208 (RERDSATAYRMTVEVFGTVVGTAIQGQIVGMA). Residues 209–232 (NTPCKNNTSPNNSSNDLIQSNNSH) are Extracellular-facing. Cys212 and Cys464 are disulfide-bonded. N-linked (GlcNAc...) asparagine glycosylation is found at Asn214, Asn220, and Asn229. The helical transmembrane segment at 233–266 (IPLKSNIFDERCAYMIASAVISLIYVVCAAVLFF) threads the bilayer. The Cytoplasmic segment spans residues 267–297 (GVREQDVQGELKAQKRVSFQKGLRLVMGHGP). The helical transmembrane segment at 298–324 (YVKLVLAFLFTSLAFMLLEGNFAVFIK) threads the bilayer. The Extracellular segment spans residues 325-335 (YTLGFREDFQN). A helical transmembrane segment spans residues 336-354 (ILLVIMVSATVSIPMWQWF). At 355–358 (LCRF) the chain is on the cytoplasmic side. The chain crosses the membrane as a helical span at residues 359 to 380 (GKKTAVYIGITWAVPFMILVVS). Over 381 to 383 (VNS) the chain is Extracellular. Residues 384–420 (SLIVSYIVSIAAGVSVGAAFLLPWSMLPDVVDDFKLQ) traverse the membrane as a helical segment. Residues 421 to 430 (NPTSQGHEAI) are Cytoplasmic-facing. A helical transmembrane segment spans residues 431–457 (FYSFYVFFTKFASGVSLGVSTLALSFA). Residues 458–469 (GYETGVCVQSDS) are Extracellular-facing. The helical transmembrane segment at 470 to 493 (VNLTLKLLVSAAPVSLIALGLLIF) threads the bilayer. The Cytoplasmic portion of the chain corresponds to 494–532 (MTYPIDEERREYNNKQLQLLLRNEEEEDEMEVLKPDITA).

This sequence belongs to the major facilitator superfamily. In terms of tissue distribution, expressed in the developing nervous system.

Its subcellular location is the cell membrane. The protein resides in the endoplasmic reticulum membrane. It carries out the reaction a 1-acyl-sn-glycero-3-phosphocholine(in) + Na(+)(in) = a 1-acyl-sn-glycero-3-phosphocholine(out) + Na(+)(out). The enzyme catalyses 1-(4Z,7Z,10Z,13Z,16Z,19Z-docosahexaenoyl)-sn-glycero-3-phosphocholine(in) + Na(+)(in) = 1-(4Z,7Z,10Z,13Z,16Z,19Z-docosahexaenoyl)-sn-glycero-3-phosphocholine(out) + Na(+)(out). The catalysed reaction is 1-(9Z-octadecenoyl)-sn-glycero-3-phosphocholine(in) + Na(+)(in) = 1-(9Z-octadecenoyl)-sn-glycero-3-phosphocholine(out) + Na(+)(out). It catalyses the reaction 1-hexadecanoyl-sn-glycero-3-phosphocholine(in) + Na(+)(in) = 1-hexadecanoyl-sn-glycero-3-phosphocholine(out) + Na(+)(out). It carries out the reaction a 1-acyl-sn-glycero-3-phosphoethanolamine(in) + Na(+)(in) = a 1-acyl-sn-glycero-3-phosphoethanolamine(out) + Na(+)(out). Sodium-dependent lysophosphatidylcholine (LPC) symporter, which plays an essential role for blood-brain barrier formation and function. Specifically expressed in endothelium of the blood-brain barrier of micro-vessels and transports LPC into the brain. Transport of LPC is essential because it constitutes the major mechanism by which docosahexaenoic acid (DHA), an omega-3 fatty acid that is essential for normal brain growth and cognitive function, enters the brain. Transports LPC carrying long-chain fatty acids such LPC oleate and LPC palmitate with a minimum acyl chain length of 14 carbons. Does not transport docosahexaenoic acid in unesterified fatty acid. The chain is Sodium-dependent lysophosphatidylcholine symporter 1-A (mfsd2aa) from Danio rerio (Zebrafish).